A 215-amino-acid polypeptide reads, in one-letter code: Cytochrome b-c1 complex subunit Rieske, mitochondrial (215 aa).

A mitochondrion-targeting transit peptide spans 1–22; it reads MLGIRSSVKTCFKPMSLTSKRL. Positions 23–30 are cleaved as a propeptide — removed in mature form; the sequence is ISQSLLAS. Topologically, residues 31-50 are mitochondrial matrix; that stretch reads KSTYRTPNFDDVLKENNDAD. The helical transmembrane segment at 51–80 threads the bilayer; sequence KGRSYAYFMVGAMGLLSSAGAKSTVETFIS. Residues 81-215 lie on the Mitochondrial intermembrane side of the membrane; it reads SMTATADVLA…EFDGDKVIVG (135 aa). Residues 90-93 are hinge; that stretch reads AMAK. The region spanning 123-214 is the Rieske domain; that stretch reads PHEIQEANSV…YEFDGDKVIV (92 aa). 4 residues coordinate [2Fe-2S] cluster: Cys159, His161, Cys178, and His181. The cysteines at positions 164 and 180 are disulfide-linked.

The protein belongs to the Rieske iron-sulfur protein family. In terms of assembly, component of the ubiquinol-cytochrome c oxidoreductase (cytochrome b-c1 complex, complex III, CIII), a multisubunit enzyme composed of 10 subunits. The complex is composed of 3 respiratory subunits cytochrome b (COB), cytochrome c1 (CYT1) and Rieske protein (RIP1), 2 core protein subunits COR1 and QCR2, and 5 low-molecular weight protein subunits QCR6, QCR7, QCR8, QCR9 and QCR10. The complex exists as an obligatory dimer and forms supercomplexes (SCs) in the inner mitochondrial membrane with a monomer or a dimer of cytochrome c oxidase (complex IV, CIV), resulting in 2 different assemblies (supercomplexes III(2)IV and III(2)IV(2)). RIP1 interacts with QCR10 on the intermembrane space (IMS) side, and with QCR9. The cofactor is [2Fe-2S] cluster. In terms of processing, processed by both the mitochondrial processing peptidase (MPP) and the mitochondrial intermediate protease (MIP). Initially, MPP removes 22 amino acids from the newly imported precursor in the mitochondrial matrix. This proteolytic processing is then followed by a second proteolytic cleavage by MIP, which removes an octapeptide to generate mature-sized RIP1.

Its subcellular location is the mitochondrion inner membrane. It carries out the reaction a quinol + 2 Fe(III)-[cytochrome c](out) = a quinone + 2 Fe(II)-[cytochrome c](out) + 2 H(+)(out). Its function is as follows. Component of the ubiquinol-cytochrome c oxidoreductase, a multisubunit transmembrane complex that is part of the mitochondrial electron transport chain which drives oxidative phosphorylation. The respiratory chain contains 3 multisubunit complexes succinate dehydrogenase (complex II, CII), ubiquinol-cytochrome c oxidoreductase (cytochrome b-c1 complex, complex III, CIII) and cytochrome c oxidase (complex IV, CIV), that cooperate to transfer electrons derived from NADH and succinate to molecular oxygen, creating an electrochemical gradient over the inner membrane that drives transmembrane transport and the ATP synthase. The cytochrome b-c1 complex catalyzes electron transfer from ubiquinol to cytochrome c, linking this redox reaction to translocation of protons across the mitochondrial inner membrane, with protons being carried across the membrane as hydrogens on the quinol. In the process called Q cycle, 2 protons are consumed from the matrix, 4 protons are released into the intermembrane space and 2 electrons are passed to cytochrome c. The Rieske protein is a catalytic core subunit containing a [2Fe-2S] iron-sulfur cluster. It cycles between 2 conformational states during catalysis to transfer electrons from the quinol bound in the Q(0) site in cytochrome b (COB) to cytochrome c1 (CYT1). In Saccharomyces cerevisiae (strain ATCC 204508 / S288c) (Baker's yeast), this protein is Cytochrome b-c1 complex subunit Rieske, mitochondrial (RIP1).